The following is a 133-amino-acid chain: MSTTGKGGKAKGKTASSKQVSRSARAGLQFPVGRISRFLKNGRYSERIGTGAPVYLAAVLEYLAAEVLELAGNAAKDNKKTRIVPRHILLAIRNDEELNKLMANTTIADGGVLPNINPMLLPSKTKKSTEPEH.

Positions Met1–Ser23 are disordered. The residue at position 2 (Ser2) is an N-acetylserine. N6-acetyllysine occurs at positions 6, 9, 11, 13, and 18. Position 123 is a phosphoserine (Ser123). A Glycyl lysine isopeptide (Lys-Gly) (interchain with G-Cter in ubiquitin) cross-link involves residue Lys124.

The protein belongs to the histone H2A family. As to quaternary structure, the nucleosome is a histone octamer containing two molecules each of H2A, H2B, H3 and H4 assembled in one H3-H4 heterotetramer and two H2A-H2B heterodimers. The octamer wraps approximately 147 bp of DNA. Monoubiquitination of Lys-124 gives a specific tag for epigenetic transcriptional repression. Post-translationally, acetylation occurs almost exclusively in the MAC.

The protein resides in the nucleus. Its subcellular location is the chromosome. Core component of nucleosome. Nucleosomes wrap and compact DNA into chromatin, limiting DNA accessibility to the cellular machineries which require DNA as a template. Histones thereby play a central role in transcription regulation, DNA repair, DNA replication and chromosomal stability. DNA accessibility is regulated via a complex set of post-translational modifications of histones, also called histone code, and nucleosome remodeling. The polypeptide is Histone H2A.1 (HTA2) (Tetrahymena thermophila (strain SB210)).